The primary structure comprises 227 residues: MSKRWFVTGTDTEVGKSVASSALLQAANRAGYPSAGYKPVASGSEMTAEGLRNGDALALQANSGVALDYDEVNPYVFAEPTSPHIVSADEGRPIDAARLSDGLRRLEQRADWVLVEGAGGWFTPLSAEYTFADWVRQEQLPVILVVGIKLGCINHAVLTAQAVQQAGLTLAGWIANDVGGAPGRRHQEYLATLRRMLPRRCWAKSRTCRRPERAPLGQYLDISLLAQ.

ATP is bound at residue 13-18; sequence EVGKSV. Residue S17 participates in Mg(2+) binding. Residue K38 is part of the active site. Substrate is bound at residue S42. ATP-binding positions include D55, 116 to 119, and 176 to 177; these read EGAG and ND. Mg(2+)-binding residues include D55 and E116.

This sequence belongs to the dethiobiotin synthetase family. In terms of assembly, homodimer. Mg(2+) serves as cofactor.

It localises to the cytoplasm. It carries out the reaction (7R,8S)-7,8-diammoniononanoate + CO2 + ATP = (4R,5S)-dethiobiotin + ADP + phosphate + 3 H(+). The protein operates within cofactor biosynthesis; biotin biosynthesis; biotin from 7,8-diaminononanoate: step 1/2. Functionally, catalyzes a mechanistically unusual reaction, the ATP-dependent insertion of CO2 between the N7 and N8 nitrogen atoms of 7,8-diaminopelargonic acid (DAPA, also called 7,8-diammoniononanoate) to form a ureido ring. In Serratia marcescens, this protein is ATP-dependent dethiobiotin synthetase BioD.